The sequence spans 46 residues: Apamin (46 aa).

The signal sequence occupies residues 1–27; sequence MISMLRCISLFLSVILITGYFVTPVMS. Disulfide bonds link Cys28-Cys38 and Cys30-Cys42. An essential for toxin activity region spans residues 40–41; sequence RR. A Histidine amide modification is found at His45.

As to expression, expressed by the venom gland.

Its subcellular location is the secreted. Its function is as follows. Neurotoxin that blocks voltage-independent calcium-activated potassium channels (KCNN1=SK1, KCNN2=SK2, KCNN3=SK3). The chain is Apamin from Apis cerana cerana (Oriental honeybee).